The primary structure comprises 283 residues: Short-chain dehydrogenase anuB (283 aa).

NADP(+) is bound by residues threonine 57, aspartate 78, asparagine 106, tyrosine 166, lysine 170, valine 199, and threonine 201. Tyrosine 166 (proton acceptor) is an active-site residue. Tyrosine 166 functions as the Proton donor in the catalytic mechanism. Lysine 170 (lowers pKa of active site Tyr) is an active-site residue.

It belongs to the short-chain dehydrogenases/reductases (SDR) family.

The protein operates within secondary metabolite biosynthesis. In terms of biological role, highly reducing polyketide synthase; part of the gene cluster that mediates the biosynthesis of annullatin D, an alkylated aromatic polyketide with a fused dihydrobenzofuran lactone ring system that exhibits potent agonistic activities toward the cannabinoid receptors. The annullatin backbone 2-hydroxymethyl-3-pentylphenol is assembled from one acetyl-CoA starter unit and 5 malonyl-CoA elongation units by cooperation of the highly reducing polyketide synthase anuA, the short-chain dehydrogenase anuB and the oxidoreductase anuC, before being hydroxylated at the C-5 alkyl chain by the cytochrome P450 monooxygenase anuE to form (8S)-annullatin E. The prenyltransferase anuH subsequently installs one isoprenyl group at the benzene ring to form (8S)-annullatin J. Enzymatic or nonenzymatic dihydro-benzofuran ring formation between the prenyl and the phenolic hydroxyl groups in (8S)-annullatin J results in two diastereomers (2S,9S)-annullatin H and compound 12. The intermediate (2S,9S)-annullatin H is then converted to (2S,9S)-annullatin D by the FAD-linked oxidoreductase anuG-catalyzed five-member lactone ring formation. The isomer 12 acts as a substrate for the short-chain dehydrogenase anuF and is oxidized to (2R)-annullatin F, which is subsequently acetylated by an acetyltransferase leading to (2R)-annullatin G formation. The remaining enzymes identified within the cluster, anuD, anuI and anuJ, seem not to be involved in annullatin biosynthesis. The polypeptide is Short-chain dehydrogenase anuB (Penicillium roqueforti (strain FM164)).